A 144-amino-acid chain; its full sequence is Large ribosomal subunit protein uL15 (144 aa).

Positions Met1–Pro56 are disordered. The span at Arg21–Ala31 shows a compositional bias: gly residues.

Belongs to the universal ribosomal protein uL15 family. As to quaternary structure, part of the 50S ribosomal subunit.

In terms of biological role, binds to the 23S rRNA. This chain is Large ribosomal subunit protein uL15, found in Burkholderia mallei (strain NCTC 10247).